The chain runs to 434 residues: ATP-dependent RNA helicase RhlB (434 aa).

A Q motif motif is present at residues 9–37; sequence QKFADLGLEPQVLDGLNAKGFINCTPIQA. The Helicase ATP-binding domain occupies 40–219; it reads LPVLLAGQDI…FEHMQEPEHV (180 aa). Residue 53–60 participates in ATP binding; the sequence is AQTGTGKT. A DEAD box motif is present at residues 165 to 168; it reads DEAD. A Helicase C-terminal domain is found at 245–390; it reads ALLQTLIEEE…QSDYDTSALL (146 aa). Residues 394-434 form a disordered region; the sequence is PAPIRLQRRPPQNRRNGSNNGQRQSGNRKHSRPRPPRSPQA. The span at 406–418 shows a compositional bias: low complexity; it reads NRRNGSNNGQRQS. The span at 419-428 shows a compositional bias: basic residues; sequence GNRKHSRPRP.

The protein belongs to the DEAD box helicase family. RhlB subfamily. In terms of assembly, component of the RNA degradosome, which is a multiprotein complex involved in RNA processing and mRNA degradation.

The protein localises to the cytoplasm. It catalyses the reaction ATP + H2O = ADP + phosphate + H(+). Functionally, DEAD-box RNA helicase involved in RNA degradation. Has RNA-dependent ATPase activity and unwinds double-stranded RNA. The protein is ATP-dependent RNA helicase RhlB of Aliivibrio salmonicida (strain LFI1238) (Vibrio salmonicida (strain LFI1238)).